The following is a 585-amino-acid chain: Optineurin (585 aa).

Residues 1 to 32 are disordered; it reads MSHQPLSCLTEKGDSSCETPGNGPSNMVHPNL. Residues 16–25 are compositionally biased toward polar residues; sequence SCETPGNGPS. Residues 38-181 are a coiled coil; the sequence is EELLQQMKEL…VSELQLKLNS (144 aa). The segment at 58-220 is interaction with Rab8; it reads MKLNNQAMKG…GPTRTDSISM (163 aa). Residues 187–192 carry the LIR motif; that stretch reads DSFVEI. Phosphoserine occurs at positions 188 and 209. Disordered regions lie at residues 200-220 and 269-299; these read EGAM…SISM and FEKK…PESV. The stretch at 244–512 forms a coiled coil; sequence CLREGNQKVE…LLKENNDFED (269 aa). At Ser346 the chain carries Phosphoserine. The tract at residues 415–585 is interaction with HD; it reads TKQQAEKVDK…LQIHVMDCII (171 aa). The segment at 416 to 525 is interaction with MYO6; sequence KQQAEKVDKV…RQSLMEMQCR (110 aa). The short motif at 478 to 483 is the UBAN element; it reads DFHAER. Residue Ser531 is modified to Phosphoserine. A CCHC NOA-type zinc finger spans residues 555–585; it reads PRSIPIHSCPKCGEVLPDIDTLQIHVMDCII. Zn(2+) contacts are provided by Cys563, Cys566, His579, and Cys583.

Self-associates. Interacts with HD. Interacts with GTF3A. Interacts with MYO6. Interacts (via UBAN) with ubiquitinated TFRC. Interacts with GTP-bound Rab8 (RAB8A and/or RAB8B). Interacts with TBC1D17. Interacts with TBK1. Interacts with TRAF3. Binds to linear ubiquitin chains. Interacts with LC3 family members MAP1LC3A, MAP1LC3B, GABARAP, GABARAPL1 and GABARAPL2; OPTN phosphorylation increases the association (at least with MAP1LC3B). Interacts with RAB12; the interaction may be indirect. Interacts with TBK1; this interaction leads to the Golgi localization of TBK1 and its subsequent activation. Interacts with palmitoyltransferase ZDHHC17/HIP14; the interaction does not lead to palmitoylation of OPTN. Interacts with CYLD. Interacts with TOM1; the interaction is indirect and is mediated by MYO6, which acts as a bridge between TOM1 and OPTN. Interacts with USP12; the interaction is independent of USP12 deubiquitinase activity and may be involved in regulation of autophagic flux. Phosphorylated by TBK1, leading to restrict bacterial proliferation in case of infection.

The protein resides in the cytoplasm. The protein localises to the perinuclear region. It is found in the golgi apparatus. It localises to the trans-Golgi network. Its subcellular location is the cytoplasmic vesicle. The protein resides in the autophagosome. The protein localises to the recycling endosome. Its function is as follows. Plays an important role in the maintenance of the Golgi complex, in membrane trafficking, in exocytosis, through its interaction with myosin VI and Rab8. Links myosin VI to the Golgi complex and plays an important role in Golgi ribbon formation. Negatively regulates the induction of IFNB in response to RNA virus infection. Plays a neuroprotective role in the eye and optic nerve. Probably part of the TNF-alpha signaling pathway that can shift the equilibrium toward induction of cell death. May act by regulating membrane trafficking and cellular morphogenesis via a complex that contains Rab8 and huntingtin (HD). Mediates the interaction of Rab8 with the probable GTPase-activating protein TBC1D17 during Rab8-mediated endocytic trafficking, such as that of transferrin receptor (TFRC/TfR); regulates Rab8 recruitment to tubules emanating from the endocytic recycling compartment. Autophagy receptor that interacts directly with both the cargo to become degraded and an autophagy modifier of the MAP1 LC3 family; targets ubiquitin-coated bacteria (xenophagy) and appears to function in the same pathway as SQSTM1 and CALCOCO2/NDP52. The protein is Optineurin (Optn) of Rattus norvegicus (Rat).